We begin with the raw amino-acid sequence, 315 residues long: Homoserine kinase (315 aa).

91 to 101 (PIGSGLGSSAS) contacts ATP.

Belongs to the GHMP kinase family. Homoserine kinase subfamily.

The protein resides in the cytoplasm. It carries out the reaction L-homoserine + ATP = O-phospho-L-homoserine + ADP + H(+). The protein operates within amino-acid biosynthesis; L-threonine biosynthesis; L-threonine from L-aspartate: step 4/5. Catalyzes the ATP-dependent phosphorylation of L-homoserine to L-homoserine phosphate. This chain is Homoserine kinase, found in Buchnera aphidicola subsp. Cinara cedri (strain Cc).